We begin with the raw amino-acid sequence, 252 residues long: Protein BTG3 (252 aa).

The segment at V138 to S163 is disordered.

Belongs to the BTG family. As to expression, ubiquitous.

Overexpression impairs serum-induced cell cycle progression from the G0/G1 to S phase. This is Protein BTG3 (Btg3) from Mus musculus (Mouse).